Reading from the N-terminus, the 976-residue chain is Dibasic-processing endoprotease (976 aa).

The signal sequence occupies residues 1 to 17 (MLRKFILGLLLASQAVA). An N-linked (GlcNAc...) asparagine glycan is attached at Asn156. The span at 172-212 (AEEAQKAQDDKGDKKEDQKDDKKEGQEAQKEGDKEDNKGDD) shows a compositional bias: basic and acidic residues. The disordered stretch occupies residues 172–246 (AEEAQKAQDD…VQWKPVDESM (75 aa)). The segment covering 213–231 (KEDGEEDDDDDEDEDDDDA) has biased composition (acidic residues). In terms of domain architecture, Peptidase S8 spans 277–595 (QWYLHNVHKA…YGKLDASKIV (319 aa)). 2 N-linked (GlcNAc...) asparagine glycosylation sites follow: Asn291 and Asn299. Asp311 serves as the catalytic Charge relay system. Asn336 carries an N-linked (GlcNAc...) asparagine glycan. Residues His349 and Ser528 each act as charge relay system in the active site. The helical transmembrane segment at 524–544 (HGGTSAAAPLAAGVFALALSV) threads the bilayer. The 134-residue stretch at 604-737 (VNNQTSFHSE…QLNVFGEQKD (134 aa)) folds into the P/Homo B domain. Asn606 is a glycosylation site (N-linked (GlcNAc...) asparagine). A disordered region spans residues 733 to 848 (GEQKDKREEN…SDSHTSWWPD (116 aa)). Residues 734 to 830 (EQKDKREENK…EEKPEEKPVD (97 aa)) are compositionally biased toward basic and acidic residues. Residues 855–875 (AWLYGAVLLVGGFIAVIGIYA) traverse the membrane as a helical segment. An N-linked (GlcNAc...) asparagine glycan is attached at Asn886. Residues 914–976 (PEDTHRRSGD…RDNDRQNLLG (63 aa)) form a disordered region. Basic and acidic residues-rich tracts occupy residues 915-928 (EDTH…DRLY) and 940-976 (MFRI…NLLG).

Belongs to the peptidase S8 family. Furin subfamily.

Its subcellular location is the membrane. The sequence is that of Dibasic-processing endoprotease (XPR6) from Yarrowia lipolytica (strain CLIB 122 / E 150) (Yeast).